Reading from the N-terminus, the 95-residue chain is Co-chaperonin GroES (95 aa).

Belongs to the GroES chaperonin family. Heptamer of 7 subunits arranged in a ring. Interacts with the chaperonin GroEL.

The protein resides in the cytoplasm. In terms of biological role, together with the chaperonin GroEL, plays an essential role in assisting protein folding. The GroEL-GroES system forms a nano-cage that allows encapsulation of the non-native substrate proteins and provides a physical environment optimized to promote and accelerate protein folding. GroES binds to the apical surface of the GroEL ring, thereby capping the opening of the GroEL channel. The protein is Co-chaperonin GroES of Stenotrophomonas maltophilia (strain R551-3).